A 233-amino-acid polypeptide reads, in one-letter code: Small ribosomal subunit protein uS2c (233 aa).

It belongs to the universal ribosomal protein uS2 family.

Its subcellular location is the plastid. It is found in the cyanelle. This is Small ribosomal subunit protein uS2c (rps2) from Cyanophora paradoxa.